We begin with the raw amino-acid sequence, 649 residues long: ABC transporter G family member 5 (649 aa).

The ABC transporter domain occupies 42 to 284 (VKTEEESLKL…LRSNGLHPPL (243 aa)). 80 to 87 (GPSGAGKS) is an ATP binding site. The tract at residues 308 to 336 (SRRAAHVLTPQTTLQEKRSEDSQGESKSG) is disordered. Residues 371-581 (EETMILTHRF…PFEGFLINEF (211 aa)) enclose the ABC transmembrane type-2 domain. The next 6 membrane-spanning stretches (helical) occupy residues 390-410 (LFAC…LIFH), 425-445 (LFAF…PIFL), 474-494 (LPFL…LVGL), 506-526 (LLIW…SALV), 529-549 (FIVG…FSGY), and 617-637 (VVIM…ILRC).

It belongs to the ABC transporter superfamily. ABCG family. Eye pigment precursor importer (TC 3.A.1.204) subfamily.

It localises to the membrane. This Arabidopsis thaliana (Mouse-ear cress) protein is ABC transporter G family member 5 (ABCG5).